The sequence spans 1321 residues: C-Jun-amino-terminal kinase-interacting protein 4 (1321 aa).

Met-1 bears the N-acetylmethionine mark. An RH1 domain is found at 7 to 95 (VVYQEEPGGS…ITQYEREKAL (89 aa)). The stretch at 66 to 166 (AQDQEHQVEL…NALHQRHTEM (101 aa)) forms a coiled coil. Residues Ser-109, Ser-183, Ser-185, Ser-194, and Ser-203 each carry the phosphoserine modification. The interval 203–292 (SLGIFPLPAG…SDVATIPTDT (90 aa)) is disordered. Residue Thr-217 is modified to Phosphothreonine. Residues 236 to 253 (ELSQPRSHTSLKVSNSPE) show a composition bias toward polar residues. Residues Ser-238, Ser-251, Ser-265, Ser-268, and Ser-272 each carry the phosphoserine modification. Residues 266–285 (DVSQGGSKATTPASTANSDV) show a composition bias toward polar residues. The residue at position 292 (Thr-292) is a Phosphothreonine. 4 positions are modified to phosphoserine: Ser-311, Ser-329, Ser-332, and Ser-347. 3 positions are modified to phosphothreonine: Thr-348, Thr-365, and Thr-418. A coiled-coil region spans residues 408–534 (REVENLILEN…LQEAVRWTEM (127 aa)). The segment covering 473–489 (LRKARAEAEDARQKAKD) has biased composition (basic and acidic residues). 2 disordered regions span residues 473-500 (LRKA…TAQR) and 563-600 (SSNT…SQLP). An RH2 domain is found at 500 to 571 (RKRFTRVEMA…SSSNTTKKPE (72 aa)). A Phosphothreonine modification is found at Thr-586. Residue Ser-588 is modified to Phosphoserine. Thr-595 bears the Phosphothreonine mark. Phosphoserine is present on residues Ser-705, Ser-728, Ser-730, Ser-732, and Ser-733. Residues 724-758 (SKQRSASQSSLDKLDQELKEQQKELKNQEELSSLV) are a coiled coil. Residues 854 to 906 (GAATSPSTNGASPVMDKPPEMEAENSEVDENVPTAEEATEATEGNAGSAEDTV) are disordered. Polar residues predominate over residues 855–864 (AATSPSTNGA). Acidic residues predominate over residues 874 to 883 (MEAENSEVDE). The span at 894–903 (ATEGNAGSAE) shows a compositional bias: low complexity. Ser-1188 carries the post-translational modification Phosphoserine. The segment at 1239-1266 (PQSSSSGTDLTGDKAGPSAQEPGSQTPL) is disordered. Residue Thr-1264 is modified to Phosphothreonine.

The protein belongs to the JIP scaffold family. Homodimer. The homodimer interacts with ARF6, forming a heterotetramer. Homooligomer. Interacts with MAX, MAPK14, MAP3K3, MYC, KNS2 and MAP2K4. Interaction with KNS2 is important in the formation of ternary complex with MAPK8. Interacts with NFKB1. Interacts with PIP4P1. Interacts with PIKFYVE. In terms of assembly, interacts with MAPK8, MAPK9, MAPK10. Post-translationally, phosphorylated by MAPK8 and MAPK14. As to expression, expressed only in testis on the round spermatids of stage I, II and II. Absent in spermatogonia and spermatocyte. In terms of tissue distribution, expressed in testis and in acute myeloid leukemia (AML) patients. Expressed in testis.

Its subcellular location is the cytoplasm. It localises to the perinuclear region. The protein localises to the lysosome membrane. It is found in the cytoplasmic vesicle. The protein resides in the secretory vesicle. Its subcellular location is the acrosome. Its activity is regulated as follows. May play a role in spermatozoa-egg-interaction. Its function is as follows. The JNK-interacting protein (JIP) group of scaffold proteins selectively mediates JNK signaling by aggregating specific components of the MAPK cascade to form a functional JNK signaling module. Regulates lysosomal positioning by acting as an adapter protein which links PIP4P1-positive lysosomes to the dynein-dynactin complex. Assists PIKFYVE selective functionality in microtubule-based endosome-to-TGN trafficking. This Homo sapiens (Human) protein is C-Jun-amino-terminal kinase-interacting protein 4.